Here is a 92-residue protein sequence, read N- to C-terminus: Small ribosomal subunit protein uS19c (92 aa).

Belongs to the universal ribosomal protein uS19 family.

It is found in the plastid. The protein resides in the chloroplast. Its function is as follows. Protein S19 forms a complex with S13 that binds strongly to the 16S ribosomal RNA. The chain is Small ribosomal subunit protein uS19c from Cycas taitungensis (Prince sago).